The sequence spans 304 residues: DCN1-like protein 3 (304 aa).

Disordered regions lie at residues 1-87 and 284-304; these read MGQC…EESS and EGEG…EEQT. The N-myristoyl glycine moiety is linked to residue Gly2. The DCUN1 domain occupies 86 to 278; it reads SSLQRLEELF…LFDTFVEWEM (193 aa).

Part of a complex containing DCUN1D3, CUL3 and RBX1. Interacts (via the DCUN1 domain) with the unneddylated cullins: interacts with CUL1, CUL2, CUL3, CUL4A, CUL4B and CUL5; these interactions promote the cullin neddylation and the identity of the cullin dictates the affinity of the interaction. Interacts preferentially with CUL3; this interaction triggers the relocalization of CUL3 to the cell membrane where CUL3 is neddylated. Interacts (via DCUN1 domain) with RBX1. May also interact with regulators or subunits of cullin-RING ligases such as RNF7, ELOB and DDB1; these interactions are bridged by cullins. Interacts (via DCUN1 domain) with CAND1; this interaction is bridged by cullins and strongly inhibits cullin neddylation. These CAND-cullin-DCNL complexes can only be neddylated in the presence of a substrate adapter. Interacts (via DCUN1 domain) with the N-terminally acetylated form of UBE2M and UBE2F.

The protein resides in the cell membrane. It is found in the cytoplasm. Its subcellular location is the nucleus. It localises to the perinuclear region. Functionally, contributes to the neddylation of all cullins by transferring NEDD8 from N-terminally acetylated NEDD8-conjugating E2s enzyme to different cullin C-terminal domain-RBX complexes and may play a role in the cell cycle progression by regulating the SCF ubiquitin E3 ligase complex, after UV damage. At the cell membrane, can promote and as well inhibit cullins neddylation. The chain is DCN1-like protein 3 from Bos taurus (Bovine).